The primary structure comprises 292 residues: tRNA pseudouridine synthase B (292 aa).

Residue aspartate 38 is the Nucleophile of the active site.

The protein belongs to the pseudouridine synthase TruB family. Type 1 subfamily.

It carries out the reaction uridine(55) in tRNA = pseudouridine(55) in tRNA. Functionally, responsible for synthesis of pseudouridine from uracil-55 in the psi GC loop of transfer RNAs. In Streptococcus gordonii (strain Challis / ATCC 35105 / BCRC 15272 / CH1 / DL1 / V288), this protein is tRNA pseudouridine synthase B.